Here is a 452-residue protein sequence, read N- to C-terminus: Pup--protein ligase (452 aa).

Position 9 (E9) interacts with Mg(2+). R53 is an ATP binding site. A Mg(2+)-binding site is contributed by Y55. The active-site Proton acceptor is D57. Mg(2+) is bound at residue E63. ATP is bound by residues T66 and W419.

It belongs to the Pup ligase/Pup deamidase family. Pup-conjugating enzyme subfamily.

It catalyses the reaction ATP + [prokaryotic ubiquitin-like protein]-L-glutamate + [protein]-L-lysine = ADP + phosphate + N(6)-([prokaryotic ubiquitin-like protein]-gamma-L-glutamyl)-[protein]-L-lysine.. It participates in protein degradation; proteasomal Pup-dependent pathway. It functions in the pathway protein modification; protein pupylation. Its function is as follows. Catalyzes the covalent attachment of the prokaryotic ubiquitin-like protein modifier Pup to the proteasomal substrate proteins, thereby targeting them for proteasomal degradation. This tagging system is termed pupylation. The ligation reaction involves the side-chain carboxylate of the C-terminal glutamate of Pup and the side-chain amino group of a substrate lysine. The polypeptide is Pup--protein ligase (Salinispora arenicola (strain CNS-205)).